Here is a 177-residue protein sequence, read N- to C-terminus: Inorganic pyrophosphatase (177 aa).

Substrate-binding residues include K30, R44, and Y56. D66, D71, and D103 together coordinate Mg(2+). Y142 is a substrate binding site.

Belongs to the PPase family. As to quaternary structure, homohexamer. Mg(2+) is required as a cofactor.

The protein localises to the cytoplasm. It catalyses the reaction diphosphate + H2O = 2 phosphate + H(+). Its function is as follows. Catalyzes the hydrolysis of inorganic pyrophosphate (PPi) forming two phosphate ions. The polypeptide is Inorganic pyrophosphatase (Mesorhizobium japonicum (strain LMG 29417 / CECT 9101 / MAFF 303099) (Mesorhizobium loti (strain MAFF 303099))).